Here is a 208-residue protein sequence, read N- to C-terminus: 3-isopropylmalate dehydratase small subunit 2 (208 aa).

The disordered stretch occupies residues 163 to 208 (EGERLDNASTSAGHGHAGTPLGDDPAKEDGPRPEQASGHQKEEHHA).

The protein belongs to the LeuD family. LeuD type 2 subfamily. In terms of assembly, heterodimer of LeuC and LeuD.

It catalyses the reaction (2R,3S)-3-isopropylmalate = (2S)-2-isopropylmalate. It participates in amino-acid biosynthesis; L-leucine biosynthesis; L-leucine from 3-methyl-2-oxobutanoate: step 2/4. Its function is as follows. Catalyzes the isomerization between 2-isopropylmalate and 3-isopropylmalate, via the formation of 2-isopropylmaleate. This Deinococcus radiodurans (strain ATCC 13939 / DSM 20539 / JCM 16871 / CCUG 27074 / LMG 4051 / NBRC 15346 / NCIMB 9279 / VKM B-1422 / R1) protein is 3-isopropylmalate dehydratase small subunit 2 (leuD2).